The chain runs to 380 residues: Aminomethyltransferase (380 aa).

Belongs to the GcvT family. As to quaternary structure, the glycine cleavage system is composed of four proteins: P, T, L and H.

The catalysed reaction is N(6)-[(R)-S(8)-aminomethyldihydrolipoyl]-L-lysyl-[protein] + (6S)-5,6,7,8-tetrahydrofolate = N(6)-[(R)-dihydrolipoyl]-L-lysyl-[protein] + (6R)-5,10-methylene-5,6,7,8-tetrahydrofolate + NH4(+). Its function is as follows. The glycine cleavage system catalyzes the degradation of glycine. The sequence is that of Aminomethyltransferase from Koribacter versatilis (strain Ellin345).